Consider the following 1583-residue polypeptide: Pentafunctional AROM polypeptide (1583 aa).

The 3-dehydroquinate synthase stretch occupies residues 1–384; it reads MSNPTKISIL…YETRASVVAN (384 aa). NAD(+)-binding positions include 44–46, 81–84, 114–116, and Asp-119; these read DTN, EVSK, and GGV. Residue Arg-130 participates in 7-phospho-2-dehydro-3-deoxy-D-arabino-heptonate binding. An NAD(+)-binding site is contributed by 139 to 140; that stretch reads TT. Residues Asp-146 and Lys-152 each contribute to the 7-phospho-2-dehydro-3-deoxy-D-arabino-heptonate site. Lys-161 provides a ligand contact to NAD(+). Asn-162 is a binding site for 7-phospho-2-dehydro-3-deoxy-D-arabino-heptonate. NAD(+) contacts are provided by residues 179–182 and Asn-190; that span reads FLET. Glu-194 lines the Zn(2+) pocket. Residues 194 to 197 and Lys-250 contribute to the 7-phospho-2-dehydro-3-deoxy-D-arabino-heptonate site; that span reads EVIK. The Proton acceptor; for 3-dehydroquinate synthase activity role is filled by Glu-260. 7-phospho-2-dehydro-3-deoxy-D-arabino-heptonate contacts are provided by residues 264 to 268 and His-271; that span reads RNLLN. Residue His-271 participates in Zn(2+) binding. The active-site Proton acceptor; for 3-dehydroquinate synthase activity is His-275. 7-phospho-2-dehydro-3-deoxy-D-arabino-heptonate contacts are provided by His-287 and Lys-356. His-287 serves as a coordination point for Zn(2+). Residues 397-842 are EPSP synthase; it reads VHPGVAQSSN…WDTLRQLFKV (446 aa). Cys-824 (for EPSP synthase activity) is an active-site residue. Positions 863–1055 are shikimate kinase; that stretch reads NASIYIIGMR…KEKEHSFFAS (193 aa). 870-877 contributes to the ATP binding site; the sequence is GMRGAGKS. The tract at residues 1056 to 1276 is 3-dehydroquinase; sequence LTLPDLREAG…AAPGQLSATE (221 aa). The Proton acceptor; for 3-dehydroquinate dehydratase activity role is filled by His-1179. The active-site Schiff-base intermediate with substrate; for 3-dehydroquinate dehydratase activity is Lys-1207. The segment at 1289–1583 is shikimate dehydrogenase; the sequence is PKKFAIFGSP…SARACSSPLI (295 aa).

The protein in the N-terminal section; belongs to the sugar phosphate cyclases superfamily. Dehydroquinate synthase family. This sequence in the 2nd section; belongs to the EPSP synthase family. In the 3rd section; belongs to the shikimate kinase family. It in the 4th section; belongs to the type-I 3-dehydroquinase family. The protein in the C-terminal section; belongs to the shikimate dehydrogenase family. In terms of assembly, homodimer. The cofactor is Zn(2+).

It localises to the cytoplasm. The enzyme catalyses 7-phospho-2-dehydro-3-deoxy-D-arabino-heptonate = 3-dehydroquinate + phosphate. It carries out the reaction 3-dehydroquinate = 3-dehydroshikimate + H2O. The catalysed reaction is shikimate + NADP(+) = 3-dehydroshikimate + NADPH + H(+). It catalyses the reaction shikimate + ATP = 3-phosphoshikimate + ADP + H(+). The enzyme catalyses 3-phosphoshikimate + phosphoenolpyruvate = 5-O-(1-carboxyvinyl)-3-phosphoshikimate + phosphate. It participates in metabolic intermediate biosynthesis; chorismate biosynthesis; chorismate from D-erythrose 4-phosphate and phosphoenolpyruvate: step 2/7. The protein operates within metabolic intermediate biosynthesis; chorismate biosynthesis; chorismate from D-erythrose 4-phosphate and phosphoenolpyruvate: step 3/7. Its pathway is metabolic intermediate biosynthesis; chorismate biosynthesis; chorismate from D-erythrose 4-phosphate and phosphoenolpyruvate: step 4/7. It functions in the pathway metabolic intermediate biosynthesis; chorismate biosynthesis; chorismate from D-erythrose 4-phosphate and phosphoenolpyruvate: step 5/7. It participates in metabolic intermediate biosynthesis; chorismate biosynthesis; chorismate from D-erythrose 4-phosphate and phosphoenolpyruvate: step 6/7. Its function is as follows. The AROM polypeptide catalyzes 5 consecutive enzymatic reactions in prechorismate polyaromatic amino acid biosynthesis. This is Pentafunctional AROM polypeptide (aromA) from Emericella nidulans (strain FGSC A4 / ATCC 38163 / CBS 112.46 / NRRL 194 / M139) (Aspergillus nidulans).